The chain runs to 315 residues: Glutathione synthetase (315 aa).

An ATP-grasp domain is found at 125 to 310 (KLFTAWFSDL…ITGMLMDAIE (186 aa)). 151–207 (WEKHSDIILKPLDGMGGASIFRVKEGDPNLGVIAETLTEHGTRYCMAQNYLPAIKDG) is a binding site for ATP. Mg(2+)-binding residues include glutamate 281 and asparagine 283.

It belongs to the prokaryotic GSH synthase family. Mg(2+) serves as cofactor. Mn(2+) is required as a cofactor.

It catalyses the reaction gamma-L-glutamyl-L-cysteine + glycine + ATP = glutathione + ADP + phosphate + H(+). It functions in the pathway sulfur metabolism; glutathione biosynthesis; glutathione from L-cysteine and L-glutamate: step 2/2. The sequence is that of Glutathione synthetase from Escherichia coli O157:H7.